We begin with the raw amino-acid sequence, 401 residues long: Argininosuccinate synthase (401 aa).

9–17 (AYSGGLDTS) is an ATP binding site. Position 86 (Y86) interacts with L-citrulline. G116 lines the ATP pocket. L-aspartate is bound by residues T118, N122, and D123. N122 is an L-citrulline binding site. R126, S174, S183, E259, and Y271 together coordinate L-citrulline.

It belongs to the argininosuccinate synthase family. Type 1 subfamily. Homotetramer.

The protein resides in the cytoplasm. The enzyme catalyses L-citrulline + L-aspartate + ATP = 2-(N(omega)-L-arginino)succinate + AMP + diphosphate + H(+). It functions in the pathway amino-acid biosynthesis; L-arginine biosynthesis; L-arginine from L-ornithine and carbamoyl phosphate: step 2/3. This Bacillus thuringiensis (strain Al Hakam) protein is Argininosuccinate synthase.